Reading from the N-terminus, the 431-residue chain is 3-phosphoshikimate 1-carboxyvinyltransferase (431 aa).

3-phosphoshikimate is bound by residues Lys-21, Ser-22, and Arg-26. Lys-21 is a phosphoenolpyruvate binding site. Phosphoenolpyruvate contacts are provided by Gly-93 and Arg-121. 3-phosphoshikimate contacts are provided by Ser-166, Gln-168, Asp-318, and Lys-345. Gln-168 contacts phosphoenolpyruvate. The active-site Proton acceptor is the Asp-318. 2 residues coordinate phosphoenolpyruvate: Arg-349 and Arg-391.

Belongs to the EPSP synthase family. As to quaternary structure, monomer.

Its subcellular location is the cytoplasm. The enzyme catalyses 3-phosphoshikimate + phosphoenolpyruvate = 5-O-(1-carboxyvinyl)-3-phosphoshikimate + phosphate. It functions in the pathway metabolic intermediate biosynthesis; chorismate biosynthesis; chorismate from D-erythrose 4-phosphate and phosphoenolpyruvate: step 6/7. Its function is as follows. Catalyzes the transfer of the enolpyruvyl moiety of phosphoenolpyruvate (PEP) to the 5-hydroxyl of shikimate-3-phosphate (S3P) to produce enolpyruvyl shikimate-3-phosphate and inorganic phosphate. The protein is 3-phosphoshikimate 1-carboxyvinyltransferase of Sulfurihydrogenibium sp. (strain YO3AOP1).